The primary structure comprises 292 residues: Cytidine deaminase (292 aa).

2 consecutive CMP/dCMP-type deaminase domains span residues 47 to 167 and 186 to 292; these read TTLK…FGPK and DHQD…YYSL. 88–90 serves as a coordination point for substrate; it reads NQE. His101 is a Zn(2+) binding site. Glu103 (proton donor) is an active-site residue. 2 residues coordinate Zn(2+): Cys128 and Cys131.

This sequence belongs to the cytidine and deoxycytidylate deaminase family. In terms of assembly, homodimer. Zn(2+) is required as a cofactor.

It catalyses the reaction cytidine + H2O + H(+) = uridine + NH4(+). The enzyme catalyses 2'-deoxycytidine + H2O + H(+) = 2'-deoxyuridine + NH4(+). Its function is as follows. This enzyme scavenges exogenous and endogenous cytidine and 2'-deoxycytidine for UMP synthesis. The polypeptide is Cytidine deaminase (Haemophilus influenzae (strain ATCC 51907 / DSM 11121 / KW20 / Rd)).